Consider the following 291-residue polypeptide: Pantothenate synthetase (291 aa).

Residue 30 to 37 participates in ATP binding; that stretch reads MGNLHEGH. Catalysis depends on His-37, which acts as the Proton donor. Gln-61 is a binding site for (R)-pantoate. Gln-61 serves as a coordination point for beta-alanine. 149 to 152 is an ATP binding site; the sequence is GEKD. Gln-155 lines the (R)-pantoate pocket. Residues Val-178 and 186 to 189 contribute to the ATP site; that span reads MSSR.

It belongs to the pantothenate synthetase family. In terms of assembly, homodimer.

The protein resides in the cytoplasm. The catalysed reaction is (R)-pantoate + beta-alanine + ATP = (R)-pantothenate + AMP + diphosphate + H(+). It participates in cofactor biosynthesis; (R)-pantothenate biosynthesis; (R)-pantothenate from (R)-pantoate and beta-alanine: step 1/1. Functionally, catalyzes the condensation of pantoate with beta-alanine in an ATP-dependent reaction via a pantoyl-adenylate intermediate. The chain is Pantothenate synthetase from Aliivibrio fischeri (strain ATCC 700601 / ES114) (Vibrio fischeri).